A 207-amino-acid polypeptide reads, in one-letter code: Dephospho-CoA kinase (207 aa).

Polar residues predominate over residues M1–T11. The disordered stretch occupies residues M1–S21. A DPCK domain is found at R15–T207. G23–T28 is an ATP binding site.

This sequence belongs to the CoaE family.

It is found in the cytoplasm. The catalysed reaction is 3'-dephospho-CoA + ATP = ADP + CoA + H(+). The protein operates within cofactor biosynthesis; coenzyme A biosynthesis; CoA from (R)-pantothenate: step 5/5. Its function is as follows. Catalyzes the phosphorylation of the 3'-hydroxyl group of dephosphocoenzyme A to form coenzyme A. The chain is Dephospho-CoA kinase from Deinococcus radiodurans (strain ATCC 13939 / DSM 20539 / JCM 16871 / CCUG 27074 / LMG 4051 / NBRC 15346 / NCIMB 9279 / VKM B-1422 / R1).